A 125-amino-acid chain; its full sequence is Small ribosomal subunit protein bS6 (125 aa).

Positions 101–125 (PMMKEEKAKNLLAPQSDAAEPTAAA) are disordered.

The protein belongs to the bacterial ribosomal protein bS6 family.

In terms of biological role, binds together with bS18 to 16S ribosomal RNA. In Laribacter hongkongensis (strain HLHK9), this protein is Small ribosomal subunit protein bS6.